The following is a 738-amino-acid chain: Ethylene receptor (738 aa).

A run of 3 helical transmembrane segments spans residues isoleucine 23–valine 43, valine 54–tryptophan 74, and valine 92–leucine 112. Cysteine 65 and histidine 69 together coordinate Cu cation. Residues aspartate 158–leucine 307 enclose the GAF domain. One can recognise a Histidine kinase domain in the interval valine 350 to glutamate 589. At histidine 353 the chain carries Phosphohistidine; by autocatalysis. Residues proline 612–leucine 729 enclose the Response regulatory domain. The residue at position 660 (aspartate 660) is a 4-aspartylphosphate.

This sequence belongs to the ethylene receptor family. In terms of assembly, homodimer; disulfide-linked. Cu cation serves as cofactor. Post-translationally, activation probably requires a transfer of a phosphate group between a His in the transmitter domain and an Asp of the receiver domain.

The protein resides in the endoplasmic reticulum membrane. The catalysed reaction is ATP + protein L-histidine = ADP + protein N-phospho-L-histidine.. Its function is as follows. May act early in the ethylene signal transduction pathway, possibly as an ethylene receptor, or as a regulator of the pathway. The protein is Ethylene receptor (ETR1) of Prunus persica (Peach).